The primary structure comprises 294 residues: Deubiquitinase OTUD6B (294 aa).

Methionine 1 carries the post-translational modification N-acetylmethionine. Residues 148–285 (LEIKQIPSDG…GEHYNSVTRL (138 aa)) enclose the OTU domain. The interval 153 to 159 (IPSDGHC) is cys-loop. The active site involves aspartate 156. The active-site Nucleophile is the cysteine 159. Positions 220 to 230 (IVNTAAWGGQL) are variable-loop. A his-loop region spans residues 268–278 (YMRHAYGLGEH). The active site involves histidine 278.

Interacts with the eukaryotic translation initiation factor 4F complex. Ubiquitously expressed. Expression is observed in several organ systems including the cardiovascular, digestive, central and peripheral nervous and musculoskeletal systems.

It carries out the reaction Thiol-dependent hydrolysis of ester, thioester, amide, peptide and isopeptide bonds formed by the C-terminal Gly of ubiquitin (a 76-residue protein attached to proteins as an intracellular targeting signal).. In terms of biological role, deubiquitinating enzyme that may play a role in the ubiquitin-dependent regulation of protein synthesis, downstream of mTORC1. May associate with the protein synthesis initiation complex and modify its ubiquitination to repress translation. May also repress DNA synthesis and modify different cellular targets thereby regulating cell growth and proliferation. May also play a role in proteasome assembly and function. The sequence is that of Deubiquitinase OTUD6B from Mus musculus (Mouse).